The sequence spans 407 residues: Arginine deiminase (407 aa).

Cysteine 397 (amidino-cysteine intermediate) is an active-site residue.

The protein belongs to the arginine deiminase family.

The protein localises to the cytoplasm. The enzyme catalyses L-arginine + H2O = L-citrulline + NH4(+). Its pathway is amino-acid degradation; L-arginine degradation via ADI pathway; carbamoyl phosphate from L-arginine: step 1/2. This chain is Arginine deiminase, found in Salmonella choleraesuis (strain SC-B67).